We begin with the raw amino-acid sequence, 164 residues long: Large ribosomal subunit protein uL10 (164 aa).

Belongs to the universal ribosomal protein uL10 family. In terms of assembly, part of the ribosomal stalk of the 50S ribosomal subunit. The N-terminus interacts with L11 and the large rRNA to form the base of the stalk. The C-terminus forms an elongated spine to which L12 dimers bind in a sequential fashion forming a multimeric L10(L12)X complex.

Functionally, forms part of the ribosomal stalk, playing a central role in the interaction of the ribosome with GTP-bound translation factors. This chain is Large ribosomal subunit protein uL10, found in Helicobacter pylori (strain HPAG1).